The sequence spans 333 residues: Photosystem II assembly protein Ycf48 (333 aa).

The signal sequence occupies residues 1 to 25; it reads MRVKMFKPLRLVLLIAVSVLLMAAR.

This sequence belongs to the Ycf48 family. In terms of assembly, part of early PSII assembly complexes which includes D1 (psbA) and PsbI; not found in mature PSII. Binds to the lumenal side of PSII complexes. Interacts with YidC.

The protein resides in the cellular thylakoid lumen. Its function is as follows. A factor required for optimal assembly of photosystem II (PSII), acting in the early stages of PSII assembly. Also plays a role in replacement of photodamaged D1 (psbA). Assists YidC in synthesis of chlorophyll-binding proteins. In Synechococcus sp. (strain JA-2-3B'a(2-13)) (Cyanobacteria bacterium Yellowstone B-Prime), this protein is Photosystem II assembly protein Ycf48.